The chain runs to 197 residues: ATP-dependent Clp protease proteolytic subunit (197 aa).

Ser101 functions as the Nucleophile in the catalytic mechanism. Residue His126 is part of the active site.

Belongs to the peptidase S14 family. Component of the chloroplastic Clp protease core complex.

Its subcellular location is the plastid. The protein resides in the chloroplast stroma. It carries out the reaction Hydrolysis of proteins to small peptides in the presence of ATP and magnesium. alpha-casein is the usual test substrate. In the absence of ATP, only oligopeptides shorter than five residues are hydrolyzed (such as succinyl-Leu-Tyr-|-NHMec, and Leu-Tyr-Leu-|-Tyr-Trp, in which cleavage of the -Tyr-|-Leu- and -Tyr-|-Trp bonds also occurs).. Cleaves peptides in various proteins in a process that requires ATP hydrolysis. Has a chymotrypsin-like activity. Plays a major role in the degradation of misfolded proteins. This Daucus carota (Wild carrot) protein is ATP-dependent Clp protease proteolytic subunit.